The primary structure comprises 526 residues: Fatty-acid amide hydrolase 2-B (526 aa).

The chain crosses the membrane as a helical span at residues 12 to 32 (CLLVLVSGLFLALFRLLSPGT). Residues Lys128 and Ser203 each act as charge relay system in the active site. Residue Ser227 is the Acyl-ester intermediate of the active site.

Belongs to the amidase family.

It is found in the membrane. The catalysed reaction is N-(5Z,8Z,11Z,14Z-eicosatetraenoyl)-ethanolamine + H2O = ethanolamine + (5Z,8Z,11Z,14Z)-eicosatetraenoate. It catalyses the reaction (9Z)-octadecenamide + H2O = (9Z)-octadecenoate + NH4(+). The protein is Fatty-acid amide hydrolase 2-B (faah2b) of Danio rerio (Zebrafish).